The following is a 383-amino-acid chain: MHC class I polypeptide-related sequence A (383 aa).

The signal sequence occupies residues 1–23 (MGLGPVFLLLAGIFPFAPPGAAA). Topologically, residues 24–307 (EPHSLRYNLT…GKVLVLQSHW (284 aa)) are extracellular. N-linked (GlcNAc...) asparagine glycosylation is present at asparagine 31. Cysteine 59 and cysteine 64 are joined by a disulfide. An N-linked (GlcNAc...) asparagine glycan is attached at asparagine 79. Cysteines 119 and 187 form a disulfide. An Ig-like C1-type domain is found at 207–296 (PMVNVTRSEA…SGNHSTHPVP (90 aa)). Residues asparagine 210, asparagine 220, and asparagine 261 are each glycosylated (N-linked (GlcNAc...) asparagine). A disulfide bond links cysteine 225 and cysteine 282. Residues 308-328 (QTFHVSAVAAAAIFVIIIFYV) form a helical membrane-spanning segment. The Cytoplasmic portion of the chain corresponds to 329–383 (RCCKKKTSAAEGPELVSLQVLDQHPVGTSDHRDATQLGFQPLMSDLGSTGSTEGA). Residues cysteine 330 and cysteine 331 are each lipidated (S-palmitoyl cysteine).

It belongs to the MHC class I family. MIC subfamily. In terms of assembly, unlike classical MHC class I molecules, does not form a heterodimer with beta-2-microglobulin. Binds as a monomer to a KLRK1/NKG2D homodimer. KLRK1 forms a complex with HCST/DAP10 in which KLRK1 binds MICA while HCST acts as an adapter molecule which enables signal transduction. Interacts with PDIA6 on the surface of tumor cells, leading to disulfide bond reduction which is required for release of MICA from tumor cells. (Microbial infection) Interacts with human cytomegalovirus/HHV-5 protein UL142. In terms of processing, N-glycosylated. Glycosylation is not essential for interaction with KLRK1/NKG2D but enhances complex formation. Proteolytically cleaved and released from the cell surface of tumor cells which impairs KLRK1/NKG2D expression and T-cell activation. Post-translationally, palmitoylated on cysteine residues in the cytoplasmic tail leading to its association with membrane microdomains enriched in cholesterol. In terms of processing, N-glycosylation is necessary for cell surface expression. (Microbial infection) Ubiquitinated by human herpesvirus 8 protein K5, leading to degradation. Widely expressed with the exception of the central nervous system where it is absent. Expressed predominantly in gastric epithelium and also in monocytes, keratinocytes, endothelial cells, fibroblasts and in the outer layer of Hassal's corpuscles within the medulla of normal thymus. In skin, expressed mainly in the keratin layers, basal cells, ducts and follicles. Also expressed in many, but not all, epithelial tumors of lung, breast, kidney, ovary, prostate and colon. In thyomas, overexpressed in cortical and medullar epithelial cells. Tumors expressing MICA display increased levels of gamma delta T-cells.

It is found in the cell membrane. Its subcellular location is the cytoplasm. Widely expressed membrane-bound protein which acts as a ligand to stimulate an activating receptor KLRK1/NKG2D, expressed on the surface of essentially all human natural killer (NK), gammadelta T and CD8 alphabeta T-cells. Up-regulated in stressed conditions, such as viral and bacterial infections or DNA damage response, serves as signal of cellular stress, and engagement of KLRK1/NKG2D by MICA triggers NK-cells resulting in a range of immune effector functions, such as cytotoxicity and cytokine production. The chain is MHC class I polypeptide-related sequence A from Homo sapiens (Human).